Reading from the N-terminus, the 833-residue chain is F1 capsule-anchoring protein (833 aa).

An N-terminal signal peptide occupies residues 1-25; that stretch reads MRYSKLFLCAGLTLATLPCWGRAYT. Residues C807 and C829 are joined by a disulfide bond.

Belongs to the fimbrial export usher family.

The protein resides in the cell outer membrane. Functionally, a probable role in capsular biogenesis. It is likely that the caf1A molecule binds F1 antigen subunits during the extracellular secretion process. This Yersinia pestis protein is F1 capsule-anchoring protein (caf1A).